Reading from the N-terminus, the 331-residue chain is Phenylalanine--tRNA ligase alpha subunit (331 aa).

Glu-252 is a Mg(2+) binding site.

It belongs to the class-II aminoacyl-tRNA synthetase family. Phe-tRNA synthetase alpha subunit type 1 subfamily. Tetramer of two alpha and two beta subunits. Mg(2+) serves as cofactor.

It is found in the cytoplasm. It carries out the reaction tRNA(Phe) + L-phenylalanine + ATP = L-phenylalanyl-tRNA(Phe) + AMP + diphosphate + H(+). This Xanthomonas oryzae pv. oryzae (strain MAFF 311018) protein is Phenylalanine--tRNA ligase alpha subunit.